The chain runs to 247 residues: Type III pantothenate kinase (247 aa).

ATP is bound at residue 7-14 (AIGNSRWH). Substrate is bound by residues Tyr91 and 95–98 (GLDR). Asp97 (proton acceptor) is an active-site residue. Asp117 is a K(+) binding site. Position 120 (Thr120) interacts with ATP.

Belongs to the type III pantothenate kinase family. As to quaternary structure, homodimer. It depends on NH4(+) as a cofactor. Requires K(+) as cofactor.

The protein localises to the cytoplasm. It carries out the reaction (R)-pantothenate + ATP = (R)-4'-phosphopantothenate + ADP + H(+). It participates in cofactor biosynthesis; coenzyme A biosynthesis; CoA from (R)-pantothenate: step 1/5. In terms of biological role, catalyzes the phosphorylation of pantothenate (Pan), the first step in CoA biosynthesis. The chain is Type III pantothenate kinase from Synechococcus sp. (strain ATCC 27144 / PCC 6301 / SAUG 1402/1) (Anacystis nidulans).